Reading from the N-terminus, the 182-residue chain is Adenine phosphoribosyltransferase (182 aa).

It belongs to the purine/pyrimidine phosphoribosyltransferase family. Homodimer.

It localises to the cytoplasm. The enzyme catalyses AMP + diphosphate = 5-phospho-alpha-D-ribose 1-diphosphate + adenine. Its pathway is purine metabolism; AMP biosynthesis via salvage pathway; AMP from adenine: step 1/1. Functionally, catalyzes a salvage reaction resulting in the formation of AMP, that is energically less costly than de novo synthesis. The sequence is that of Adenine phosphoribosyltransferase from Bordetella pertussis (strain Tohama I / ATCC BAA-589 / NCTC 13251).